We begin with the raw amino-acid sequence, 868 residues long: MSIPSILKKDTNIDMQENNINDLVASASRVIAPLWPISTFAAHHPWMGLEKQSFEQVANWLKEARNVDIYPSASMIHSAKVKGEIEESFLQMSLSRWLDSQSFHIPREKAERFCQAALKLEKLPSSLLSSPEVNKLAEEMNYINTASMQASVMQPISSLIESQNSENLSDVLNYHIIKWCKLYLDESGSNWTMPNREKGFYRAWQHLITFDPALSKNERKVLKDWPQDAEVALARALFELGISESNIQSYLEGHLLSLPGWAGMIRWRSQQSIQEQELLIEYLAVRISMELAIVKPYLPLKNQKVEKKVSIVPLIASWIYWGNISTREWLQMPAAEQSELLVFAYRFDENIRKKLWLEAWEQTHAEQLREKIASTQRATNDKKRVLAQLAFCIDVRSEPFRRHLEKLGPFETFGIAGFFGLPIATSELGSNNNHSSLPVILKPKHQIKELTNENELKSYEQRKRVGSSVRSTFKTMKQNVMTSMALPELSGPLLGLQMVTRSFVPRGVGGFIRKLRKTMLQKPATTFSLNHVHDTKGEIPIGFTKEEKVNYVRQALKMVGLTEKFAPLVVMCGHSSQSTNNPYAAALECGACGGAAGGFNARVFATLCNLPEVREALFAEGIKIPEDTIFAAAEHKTTVDELEWIYVPELSETAQEAFDCIESIMPNVSQHANRERLTQLPNFKTKIKNASKEAHRFAEDWSEIRPEWGLARNASFIIGQRELTQDCDLEGRAFLHNYDWKQDESGDILANIIAGPGTVAQWINLQYYASTVAPHYYGSGNKTTQTVTAGLGVMQGNASDLLPGLPWQSVMQSDSETYHSPLRLLIVIQAPSQYIERLLNNDFTFREKVQNGWVRLASVDPKGRWKNW.

Positions 392, 394, 574, and 589 each coordinate Zn(2+).

The protein belongs to the inorganic carbon transporter (TC 9.A.2) DabA family. In terms of assembly, forms a complex with DabB. It depends on Zn(2+) as a cofactor.

It localises to the cell membrane. In terms of biological role, part of an energy-coupled inorganic carbon pump. In Bacillus cereus (strain B4264), this protein is Probable inorganic carbon transporter subunit DabA.